The sequence spans 316 residues: dTDP-4-dehydro-6-deoxyglucose reductase (316 aa).

NAD(+) is bound at residue 16-17 (FI). Tyr151 serves as the catalytic Proton acceptor. Lys155 contacts NAD(+).

It belongs to the NAD(P)-dependent epimerase/dehydratase family.

The enzyme catalyses dTDP-alpha-D-fucose + NAD(+) = dTDP-4-dehydro-6-deoxy-alpha-D-glucose + NADH + H(+). It catalyses the reaction dTDP-alpha-D-fucose + NADP(+) = dTDP-4-dehydro-6-deoxy-alpha-D-glucose + NADPH + H(+). It functions in the pathway bacterial outer membrane biogenesis; LPS O-antigen biosynthesis. Inhibited by Cu(2+), while other divalent cations such as Ca(2+), Co(2+), Fe(2+), Mn(2+) and Mg(2+) have no obvious effects on enzyme activity. In terms of biological role, catalyzes the stereospecific reduction of the C-4 keto group of dTDP-4-dehydro-6-deoxy-D-glucose, leading to dTDP-D-fucopyranose. This is a step in the biosynthesis of D-fucofuranose, a component of E.coli O52 O antigen. Is more efficient using NADH than NADPH as cosubstrate. In Escherichia coli, this protein is dTDP-4-dehydro-6-deoxyglucose reductase (fcf1).